Consider the following 215-residue polypeptide: Protein NETWORKED 3B (215 aa).

In terms of domain architecture, NAB spans 5-90 (SKWWWIGANH…QKHDLLIKTS (86 aa)). Residues 134-165 (DETMKEELEILREENRVYKEKKEVVTRLLANL) are a coiled coil.

This sequence belongs to the NET family. In terms of assembly, interacts with F-actin.

Plant-specific actin binding protein. May be part of a membrane-cytoskeletal adapter complex. This chain is Protein NETWORKED 3B, found in Arabidopsis thaliana (Mouse-ear cress).